The sequence spans 327 residues: Tyrosine--tRNA ligase (327 aa).

L-tyrosine is bound at residue Tyr33. Residues 38–46 (PSGVLHLGH) carry the 'HIGH' region motif. L-tyrosine contacts are provided by Tyr154, Gln158, Asp161, and Gln176. Residues 212–216 (KMSSS) carry the 'KMSKS' region motif. Ser215 is a binding site for ATP.

Belongs to the class-I aminoacyl-tRNA synthetase family. TyrS type 3 subfamily. Homodimer.

Its subcellular location is the cytoplasm. It catalyses the reaction tRNA(Tyr) + L-tyrosine + ATP = L-tyrosyl-tRNA(Tyr) + AMP + diphosphate + H(+). Its function is as follows. Catalyzes the attachment of tyrosine to tRNA(Tyr) in a two-step reaction: tyrosine is first activated by ATP to form Tyr-AMP and then transferred to the acceptor end of tRNA(Tyr). The protein is Tyrosine--tRNA ligase of Halobacterium salinarum (strain ATCC 29341 / DSM 671 / R1).